Reading from the N-terminus, the 687-residue chain is Mitochondrial 15S rRNA processing factor ppr3 (687 aa).

The N-terminal 49 residues, Met1–Cys49, are a transit peptide targeting the mitochondrion. PPR repeat units lie at residues Asn262–Pro296, Ser297–Ile331, Ser334–Pro368, and Thr372–Pro407.

Belongs to the CCM1 family. In terms of assembly, binds to mitochondrial small subunit 15S rRNA.

The protein resides in the mitochondrion. Its function is as follows. Regulates mitochondrial small subunit maturation by controlling 15S rRNA 5'-end processing. Localizes to the 5' precursor of the 15S rRNA in a position that is subsequently occupied by mS47 in the mature yeast mtSSU. Uses structure and sequence-specific RNA recognition, binding to a single-stranded region of the precursor and specifically recognizing bases -6 to -1. The exchange of Ccm1 for mS47 is coupled to the irreversible removal of precursor rRNA that is accompanied by conformational changes of the mitoribosomal proteins uS5m and mS26. These conformational changes signal completion of 5'-end rRNA processing through protection of the mature 5'-end of the 15S rRNA and stabilization of mS47. The removal of the 5' precursor together with the dissociation of Ccm1 may be catalyzed by the 5'-3' exoribonuclease Pet127. Involved in the specific removal of group I introns in mitochondrial encoded transcripts. The sequence is that of Mitochondrial 15S rRNA processing factor ppr3 from Schizosaccharomyces pombe (strain 972 / ATCC 24843) (Fission yeast).